The sequence spans 562 residues: Phosphoacetylglucosamine mutase (562 aa).

The Phosphoserine intermediate role is filled by S74. Residues S74, D291, D293, and D295 each contribute to the Mg(2+) site. Residues 395–397, 526–530, and R535 each bind substrate; these read EAN and RPSGT.

The protein belongs to the phosphohexose mutase family. Mg(2+) is required as a cofactor.

It catalyses the reaction N-acetyl-alpha-D-glucosamine 1-phosphate = N-acetyl-D-glucosamine 6-phosphate. It participates in nucleotide-sugar biosynthesis; UDP-N-acetyl-alpha-D-glucosamine biosynthesis; N-acetyl-alpha-D-glucosamine 1-phosphate from alpha-D-glucosamine 6-phosphate (route I): step 2/2. In terms of biological role, interconverts GlcNAc-6-P and GlcNAc-1-P. The chain is Phosphoacetylglucosamine mutase from Oryza sativa subsp. japonica (Rice).